A 582-amino-acid chain; its full sequence is ATP-dependent lipid A-core flippase (582 aa).

The next 5 helical transmembrane spans lie at 16 to 36, 63 to 83, 153 to 173, 253 to 273, and 275 to 295; these read LWPT…ALIL, VLVW…ITSY, IIGL…ILIV, PIIQ…ASFP, and VMDS…IALM. An ABC transmembrane type-1 domain is found at 28–310; sequence IVAGVALILN…LTNVNAQFQR (283 aa). Residues 342–578 enclose the ABC transporter domain; it reads VEFRNVTFTY…RGVYAQLHKM (237 aa). Residue 376–383 participates in ATP binding; sequence GRSGSGKS.

The protein belongs to the ABC transporter superfamily. Lipid exporter (TC 3.A.1.106) family. Homodimer.

Its subcellular location is the cell inner membrane. The catalysed reaction is ATP + H2O + lipid A-core oligosaccharideSide 1 = ADP + phosphate + lipid A-core oligosaccharideSide 2.. Involved in lipopolysaccharide (LPS) biosynthesis. Translocates lipid A-core from the inner to the outer leaflet of the inner membrane. Transmembrane domains (TMD) form a pore in the inner membrane and the ATP-binding domain (NBD) is responsible for energy generation. In Escherichia coli O157:H7, this protein is ATP-dependent lipid A-core flippase.